We begin with the raw amino-acid sequence, 352 residues long: MNVAVAVSGGTDSLYTLATLREAFGNHHVFALHARFKEQITNDPVPALKEQCHNLNVPLHVVDLHKEFNELIIRPFIKAYADGKTPNPCVHCNAKVKFGLLQKKAQELGANQIATGHYVSLIDHDLYGKALKCGADSTKDQSYFLALTPREQLQTAIFPLGTLRKTEVRERLQKMGLEVPLPKESQEICFVPNDDYRKFLQSSDVDLLSEGRMVMLDGTLVGKHKGLWKYTEGQRRGLGVSWSEPLYVAHKNHSCNELVLGTAKDILVDTCTAQDINFLVPQDNWPKELFVRTRYRQQAVPADIQFVTNTSSSKKITIHFHSPQLPAAPGQLAAIFDKSGYVLAGGLITNDL.

ATP is bound at residue 6–13; it reads AVSGGTDS. The Nucleophile role is filled by cysteine 92. A disulfide bridge links cysteine 92 with cysteine 189. Glycine 116 serves as a coordination point for ATP. Positions 139–141 are interaction with tRNA; sequence KDQ. Catalysis depends on cysteine 189, which acts as the Cysteine persulfide intermediate. The interval 294–295 is interaction with tRNA; the sequence is RY.

It belongs to the MnmA/TRMU family.

The protein resides in the cytoplasm. The catalysed reaction is S-sulfanyl-L-cysteinyl-[protein] + uridine(34) in tRNA + AH2 + ATP = 2-thiouridine(34) in tRNA + L-cysteinyl-[protein] + A + AMP + diphosphate + H(+). Functionally, catalyzes the 2-thiolation of uridine at the wobble position (U34) of tRNA, leading to the formation of s(2)U34. In Lawsonia intracellularis (strain PHE/MN1-00), this protein is tRNA-specific 2-thiouridylase MnmA.